A 344-amino-acid polypeptide reads, in one-letter code: Selenide, water dikinase (344 aa).

Cys16 is an active-site residue. ATP contacts are provided by residues Lys19 and 47–49 (SRD). Asp50 is a binding site for Mg(2+). ATP is bound by residues Asp67, Asp90, and 138–140 (GHS). Asp90 is a binding site for Mg(2+). Asp226 is a binding site for Mg(2+).

The protein belongs to the selenophosphate synthase 1 family. Class I subfamily. Homodimer. The cofactor is Mg(2+).

The catalysed reaction is hydrogenselenide + ATP + H2O = selenophosphate + AMP + phosphate + 2 H(+). Synthesizes selenophosphate from selenide and ATP. The protein is Selenide, water dikinase of Pseudomonas aeruginosa (strain ATCC 15692 / DSM 22644 / CIP 104116 / JCM 14847 / LMG 12228 / 1C / PRS 101 / PAO1).